A 291-amino-acid polypeptide reads, in one-letter code: Popeye domain-containing protein 3 (291 aa).

N4 is a glycosylation site (N-linked (GlcNAc...) asparagine). A run of 3 helical transmembrane segments spans residues 27–44, 48–70, and 77–99; these read GAIYHLASILFVVGFMGG, FGLLYVFSLLGLGFLCSAVWAWV, and IFSWNFVLFVICFMQFVHIAYQV.

The protein belongs to the popeye family. Expressed predominantly in skeletal muscle (at protein level). Also detected in heart.

It is found in the membrane. In terms of biological role, may play a role in the maintenance of heart function mediated, at least in part, through cAMP-binding. May play a role in the regulation of KCNK2/TREK-1-mediated current amplitude. This is Popeye domain-containing protein 3 (POPDC3) from Homo sapiens (Human).